We begin with the raw amino-acid sequence, 120 residues long: Large ribosomal subunit protein uL18 (120 aa).

The protein belongs to the universal ribosomal protein uL18 family. Part of the 50S ribosomal subunit; part of the 5S rRNA/L5/L18/L25 subcomplex. Contacts the 5S and 23S rRNAs.

Functionally, this is one of the proteins that bind and probably mediate the attachment of the 5S RNA into the large ribosomal subunit, where it forms part of the central protuberance. This chain is Large ribosomal subunit protein uL18, found in Rhizobium johnstonii (strain DSM 114642 / LMG 32736 / 3841) (Rhizobium leguminosarum bv. viciae).